We begin with the raw amino-acid sequence, 228 residues long: Sec-independent protein translocase protein TatB (228 aa).

Residues 1 to 21 form a helical membrane-spanning segment; it reads MFDFGLGELIFVGIIALIVLG. 2 disordered regions span residues 106-164 and 196-228; these read TPAD…TDKD and VPHTTSLRKQAINRKRDFRPKHRAKPKLRVRKS. Over residues 135–151 the composition is skewed to basic and acidic residues; that stretch reads PSERSDTSAETLGDDRQ. Residues 206–228 are compositionally biased toward basic residues; that stretch reads AINRKRDFRPKHRAKPKLRVRKS.

The protein belongs to the TatB family. The Tat system comprises two distinct complexes: a TatABC complex, containing multiple copies of TatA, TatB and TatC subunits, and a separate TatA complex, containing only TatA subunits. Substrates initially bind to the TatABC complex, which probably triggers association of the separate TatA complex to form the active translocon.

It is found in the cell inner membrane. Functionally, part of the twin-arginine translocation (Tat) system that transports large folded proteins containing a characteristic twin-arginine motif in their signal peptide across membranes. Together with TatC, TatB is part of a receptor directly interacting with Tat signal peptides. TatB may form an oligomeric binding site that transiently accommodates folded Tat precursor proteins before their translocation. The protein is Sec-independent protein translocase protein TatB of Neisseria gonorrhoeae (strain ATCC 700825 / FA 1090).